The primary structure comprises 219 residues: 2-hydroxy-3-keto-5-methylthiopentenyl-1-phosphate phosphatase (219 aa).

The protein belongs to the HAD-like hydrolase superfamily. MtnX family.

It carries out the reaction 2-hydroxy-5-methylsulfanyl-3-oxopent-1-enyl phosphate + H2O = 1,2-dihydroxy-5-(methylsulfanyl)pent-1-en-3-one + phosphate. Its pathway is amino-acid biosynthesis; L-methionine biosynthesis via salvage pathway; L-methionine from S-methyl-5-thio-alpha-D-ribose 1-phosphate: step 4/6. Dephosphorylates 2-hydroxy-3-keto-5-methylthiopentenyl-1-phosphate (HK-MTPenyl-1-P) yielding 1,2-dihydroxy-3-keto-5-methylthiopentene (DHK-MTPene). This is 2-hydroxy-3-keto-5-methylthiopentenyl-1-phosphate phosphatase from Bacillus thuringiensis (strain Al Hakam).